The following is a 231-amino-acid chain: Transcriptional regulatory protein KdpE (231 aa).

The region spanning 4 to 117 (KILIIEDDHA…ELRARIRVIE (114 aa)) is the Response regulatory domain. Residue Asp53 is modified to 4-aspartylphosphate. Positions 127–227 (NIVFTNGLLS…HPRIGYQMLQ (101 aa)) form a DNA-binding region, ompR/PhoB-type.

Phosphorylated by KdpD. Phosphorylation is required for transcriptional activity.

Functionally, member of the two-component regulatory system KdpD/KdpE that regulates the transcription of a series of virulence factors through sensing external K(+) concentrations. Also regulates capsular polysaccharide synthesis. Upon phosphorylation by KpdD, functions as a transcriptional regulator by direct binding to promoter regions of target genes including spa, hla, aur and geh. Represses the transcription of kdpFABC operon. The chain is Transcriptional regulatory protein KdpE from Staphylococcus aureus (strain NCTC 8325 / PS 47).